The primary structure comprises 630 residues: Golgin subfamily A member 8K (630 aa).

The tract at residues 1 to 76 (MAEETQHNKL…TSSATLKDLE (76 aa)) is disordered. Coiled-coil stretches lie at residues 86–148 (LDSR…LNTD) and 224–411 (LTQL…QQNQ). Over residues 352–362 (KQEERIQEQHK) the composition is skewed to basic and acidic residues. Disordered stretches follow at residues 352-379 (KQEERIQEQHKSLQQLAKPQSVFEEPNN) and 424-444 (GEGHGEHLDSEGEEAPQPMPS).

It belongs to the GOLGA8 family.

In Homo sapiens (Human), this protein is Golgin subfamily A member 8K.